Here is a 257-residue protein sequence, read N- to C-terminus: Zinc transporter ZupT (257 aa).

Helical transmembrane passes span 5 to 25 (LILTILAGAATFIGAFLGVLG), 32 to 52 (LLAFSLGFAAGIMLLISLMEM), and 61 to 81 (GMSPVLGYGMFIFGLLGYFGL). Residues Asn-120 and Glu-123 each coordinate Fe(2+). Zn(2+) contacts are provided by Glu-123 and His-148. The next 4 helical transmembrane spans lie at 137–157 (LGFGIALAVALHNIPEGLAVA), 171–191 (ILWAGISGLAEILGGVLAWLI), 195–215 (MISPVVMAAIMAAVAGIMVAL), and 236–256 (GVLCGMSVMGFSLVLLQTAGI). Fe(2+) is bound by residues Asn-149, Glu-152, and Glu-181. Glu-152 is a Zn(2+) binding site.

The protein belongs to the ZIP transporter (TC 2.A.5) family. ZupT subfamily.

The protein resides in the cell inner membrane. It catalyses the reaction Zn(2+)(in) = Zn(2+)(out). Functionally, mediates zinc uptake. May also transport other divalent cations. This is Zinc transporter ZupT from Escherichia coli O45:K1 (strain S88 / ExPEC).